A 295-amino-acid chain; its full sequence is uncharacterized protein (295 aa).

This is an uncharacterized protein from Rickettsia prowazekii (strain Madrid E).